Here is a 790-residue protein sequence, read N- to C-terminus: uncharacterized protein (790 aa).

A TBDR plug domain is found at 37 to 172 (APVPVPVNGN…NGGVIDAKIK (136 aa)). The TBDR beta-barrel domain maps to 178–790 (DSKVKLGYRT…TFWLDVSMKF (613 aa)).

This sequence belongs to the TonB-dependent receptor family.

Its subcellular location is the cell outer membrane. This is an uncharacterized protein from Escherichia coli (strain K12).